A 44-amino-acid chain; its full sequence is Photosystem I reaction center subunit IX (44 aa).

The chain crosses the membrane as a helical span at residues 7–27 (YLSTAPVLAISWLIFVAGLLI).

This sequence belongs to the PsaJ family.

It localises to the plastid. Its subcellular location is the chloroplast thylakoid membrane. Functionally, may help in the organization of the PsaE and PsaF subunits. This Larix decidua (European larch) protein is Photosystem I reaction center subunit IX.